Consider the following 367-residue polypeptide: Protein RecA (367 aa).

73 to 80 (GPESSGKT) is an ATP binding site. A disordered region spans residues 345-367 (DEPVAKKASAKESKEAKELKEVE).

Belongs to the RecA family.

The protein localises to the cytoplasm. Its function is as follows. Can catalyze the hydrolysis of ATP in the presence of single-stranded DNA, the ATP-dependent uptake of single-stranded DNA by duplex DNA, and the ATP-dependent hybridization of homologous single-stranded DNAs. It interacts with LexA causing its activation and leading to its autocatalytic cleavage. The protein is Protein RecA of Herminiimonas arsenicoxydans.